Here is a 474-residue protein sequence, read N- to C-terminus: MSLSQKILELLKNTETIKSTDIDVRSNELYPVLLSLASKEIISFTFKEQIIYKLTEEGESILKNGSYEFNLYNSIGDNGMELLEVDKYNLGKVNAFKNKWIKKVGDKVYKSADNVEDNVKNMLNNVTNKIYQKEEISLLKKRKLIYQAKEVVYFIKKGPLYGKDSDNITELISKMVISGEYKHLNFKPYNFNTKGNIQSQGALHPLMKVREEIRKIFLEMGFNEMTTNKFVESSFWNFDTLFQPQNHPSRDAHDTFFMKTPSTTSYIPIDYMKMIKKIHSVGDFDSDGHFSDWDIKEAEKNILRSHTTACSTRTMLEIAKGEFISAKLFSIDRVFRNEALDATHLAEFNQVEGLIVAKGLTLGNLMGYLKRFFEKLGITDIKFKPAYNPYTEPSMEVFGYHKGLKKWIEVGNSGMFRPEVLRPMGFDKDVRAIGFGLSLERPTMIKYGISNIRDLIGPKVDIEFIKKSEMCFFN.

Residues 1–150 (MSLSQKILEL…KRKLIYQAKE (150 aa)) are contains the major tRNA-Phe binding sites. L-phenylalanine is bound by residues Thr308, 350–352 (QVE), and Tyr390. Glu392 contributes to the Mg(2+) binding site. Phe416 contributes to the L-phenylalanine binding site.

It belongs to the class-II aminoacyl-tRNA synthetase family. Phe-tRNA synthetase alpha subunit type 2 subfamily. In terms of assembly, tetramer of two alpha and two beta subunits. Mg(2+) serves as cofactor.

The protein resides in the cytoplasm. It catalyses the reaction tRNA(Phe) + L-phenylalanine + ATP = L-phenylalanyl-tRNA(Phe) + AMP + diphosphate + H(+). In Vairimorpha ceranae (strain BRL01) (Microsporidian parasite), this protein is Probable phenylalanine--tRNA ligase alpha subunit.